We begin with the raw amino-acid sequence, 214 residues long: Lazarillo protein (214 aa).

Positions 1–21 (MIRRGLLSVTAALVLLSVSCS) are cleaved as a signal peptide. Residues Asn38, Asn74, Asn84, Asn90, Asn130, Asn158, and Asn161 are each glycosylated (N-linked (GlcNAc...) asparagine). The GPI-anchor amidated alanine moiety is linked to residue Ala192. Positions 193-214 (GAEHVVGAMLSVAIASLFALLH) are cleaved as a propeptide — removed in mature form.

The protein belongs to the calycin superfamily. Lipocalin family. N-glycosylated. Post-translationally, contains disulfide bonds. Expressed by a subset of neuroblasts, ganglion mother cells and neurons of the CNS; by all sensory neurons of the PNS.

It is found in the cell membrane. Putative role in axonal outgrowth and guidance, required for the navigation of identified commissural neurons. Could be a receptor the midline morphogen. The protein is Lazarillo protein of Schistocerca americana (American grasshopper).